Reading from the N-terminus, the 109-residue chain is UPF0235 protein MA_4097 (109 aa).

It belongs to the UPF0235 family.

The protein is UPF0235 protein MA_4097 of Methanosarcina acetivorans (strain ATCC 35395 / DSM 2834 / JCM 12185 / C2A).